Consider the following 64-residue polypeptide: Large ribosomal subunit protein eL37 (64 aa).

Zn(2+)-binding residues include C20, C23, C35, and C38. The C4-type zinc-finger motif lies at 20-38 (CRRCGRRSFHVRKKVCAAC).

The protein belongs to the eukaryotic ribosomal protein eL37 family. The cofactor is Zn(2+).

Functionally, binds to the 23S rRNA. This is Large ribosomal subunit protein eL37 from Methanococcus maripaludis (strain C5 / ATCC BAA-1333).